Consider the following 215-residue polypeptide: Glutathione S-transferase D6 (215 aa).

The GST N-terminal domain occupies 1 to 80; it reads MDLYNMSGSP…YLVEQYGKDD (80 aa). Residues Ser9, 50 to 52, and 64 to 66 contribute to the glutathione site; these read HTI and ETR. The GST C-terminal domain occupies 86 to 206; that stretch reads DPQKQALINQ…LARIQSAKKF (121 aa).

It belongs to the GST superfamily. Delta family. As to quaternary structure, homodimer.

The enzyme catalyses RX + glutathione = an S-substituted glutathione + a halide anion + H(+). In terms of biological role, conjugation of reduced glutathione to a wide number of exogenous and endogenous hydrophobic electrophiles. May be involved in detoxification. The chain is Glutathione S-transferase D6 from Drosophila melanogaster (Fruit fly).